The sequence spans 361 residues: Histidinol-phosphate aminotransferase (361 aa).

Residue lysine 219 is modified to N6-(pyridoxal phosphate)lysine.

It belongs to the class-II pyridoxal-phosphate-dependent aminotransferase family. Histidinol-phosphate aminotransferase subfamily. In terms of assembly, homodimer. It depends on pyridoxal 5'-phosphate as a cofactor.

The enzyme catalyses L-histidinol phosphate + 2-oxoglutarate = 3-(imidazol-4-yl)-2-oxopropyl phosphate + L-glutamate. It participates in amino-acid biosynthesis; L-histidine biosynthesis; L-histidine from 5-phospho-alpha-D-ribose 1-diphosphate: step 7/9. The polypeptide is Histidinol-phosphate aminotransferase (Acinetobacter baylyi (strain ATCC 33305 / BD413 / ADP1)).